A 167-amino-acid polypeptide reads, in one-letter code: Ribosome maturation factor RimM (167 aa).

In terms of domain architecture, PRC barrel spans 94 to 166; sequence TGRAYLHELI…YMVVPRFDEF (73 aa).

It belongs to the RimM family. Binds ribosomal protein uS19.

The protein localises to the cytoplasm. Its function is as follows. An accessory protein needed during the final step in the assembly of 30S ribosomal subunit, possibly for assembly of the head region. Essential for efficient processing of 16S rRNA. May be needed both before and after RbfA during the maturation of 16S rRNA. It has affinity for free ribosomal 30S subunits but not for 70S ribosomes. In Chlorobium phaeobacteroides (strain DSM 266 / SMG 266 / 2430), this protein is Ribosome maturation factor RimM.